A 103-amino-acid polypeptide reads, in one-letter code: Small ribosomal subunit protein uS10 (103 aa).

Belongs to the universal ribosomal protein uS10 family. As to quaternary structure, part of the 30S ribosomal subunit.

Functionally, involved in the binding of tRNA to the ribosomes. This Psychrobacter sp. (strain PRwf-1) protein is Small ribosomal subunit protein uS10.